Consider the following 442-residue polypeptide: Septin-8 (442 aa).

The span at 1-16 shows a compositional bias: basic and acidic residues; it reads MAATDLERISNAEPEP. The disordered stretch occupies residues 1-21; the sequence is MAATDLERISNAEPEPRSLSL. A2 is subject to N-acetylalanine. S10 is subject to Phosphoserine. Residues 41–307 form the Septin-type G domain; sequence QGFSFNILCV…ELYRRCKLEE (267 aa). Positions 51–58 are G1 motif; sequence GETGIGKS. Residues 51–58, G106, 187–195, G241, and R256 each bind GTP; these read GETGIGKS and KADTISKSE. A G3 motif region spans residues 103–106; it reads DAVG. The interval 186-189 is G4 motif; sequence AKAD. Residues 322-407 are a coiled coil; sequence LQETYEAKRK…FNCRKAAMEA (86 aa). Residues 411–420 show a composition bias toward polar residues; that stretch reads QALHATSQQP. The tract at residues 411 to 442 is disordered; the sequence is QALHATSQQPLRKDKDKKKVGGWSSIYSVTIP.

The protein belongs to the TRAFAC class TrmE-Era-EngA-EngB-Septin-like GTPase superfamily. Septin GTPase family. As to quaternary structure, septins polymerize into heterooligomeric protein complexes that form filaments, and can associate with cellular membranes, actin filaments and microtubules. GTPase activity is required for filament formation. Interacts with SEPTIN7. Interacts with CDK14, SEPTIN4 and SEPTIN5. Interacts with VAMP2; the interaction inhibits interaction of VAMP2 with SYP. Interacts with STX1A. As to expression, expressed in cerebrum, hippocampus and cerebellum (at protein level). Expressed in heart (at protein level).

The protein localises to the cytoplasm. The protein resides in the cytoskeleton. It localises to the synapse. Its subcellular location is the cell projection. It is found in the axon. The protein localises to the cytoplasmic vesicle. The protein resides in the secretory vesicle. It localises to the synaptic vesicle membrane. Its subcellular location is the presynapse. Functionally, filament-forming cytoskeletal GTPase. May play a role in platelet secretion. Seems to participate in the process of SNARE complex formation in synaptic vesicles. In Rattus norvegicus (Rat), this protein is Septin-8.